The chain runs to 280 residues: Eukaryotic translation initiation factor 3 subunit F-1 (280 aa).

In terms of domain architecture, MPN spans 8–138 (VRVHPVVLFQ…LRAYICIQLG (131 aa)).

This sequence belongs to the eIF-3 subunit F family. Component of the eukaryotic translation initiation factor 3 (eIF-3) complex. The eIF-3 complex interacts with pix.

It is found in the cytoplasm. Component of the eukaryotic translation initiation factor 3 (eIF-3) complex, which is involved in protein synthesis of a specialized repertoire of mRNAs and, together with other initiation factors, stimulates binding of mRNA and methionyl-tRNAi to the 40S ribosome. The eIF-3 complex specifically targets and initiates translation of a subset of mRNAs involved in cell proliferation. This chain is Eukaryotic translation initiation factor 3 subunit F-1, found in Drosophila mojavensis (Fruit fly).